Consider the following 918-residue polypeptide: Nitrate reductase [NADH] (918 aa).

A disordered region spans residues Lys-25–Ser-44. Cys-195 is a Mo-molybdopterin binding site. Residues Ser-543–Ile-618 enclose the Cytochrome b5 heme-binding domain. Positions 578 and 601 each coordinate heme. The region spanning Asn-661 to Thr-774 is the FAD-binding FR-type domain. Residues Arg-714–Thr-717, Val-731–Tyr-735, Phe-736, Phe-743, Ile-748–Ser-750, and Thr-801 each bind FAD.

It belongs to the nitrate reductase family. In terms of assembly, homodimer. FAD serves as cofactor. The cofactor is heme. Requires Mo-molybdopterin as cofactor.

The enzyme catalyses nitrite + NAD(+) + H2O = nitrate + NADH + H(+). In terms of biological role, nitrate reductase is a key enzyme involved in the first step of nitrate assimilation in plants, fungi and bacteria. The polypeptide is Nitrate reductase [NADH] (Cucurbita maxima (Pumpkin)).